Here is a 181-residue protein sequence, read N- to C-terminus: Adenine phosphoribosyltransferase (181 aa).

Belongs to the purine/pyrimidine phosphoribosyltransferase family. Homodimer.

The protein resides in the cytoplasm. It catalyses the reaction AMP + diphosphate = 5-phospho-alpha-D-ribose 1-diphosphate + adenine. It functions in the pathway purine metabolism; AMP biosynthesis via salvage pathway; AMP from adenine: step 1/1. Functionally, catalyzes a salvage reaction resulting in the formation of AMP, that is energically less costly than de novo synthesis. The protein is Adenine phosphoribosyltransferase of Rhodopseudomonas palustris (strain ATCC BAA-98 / CGA009).